Here is a 258-residue protein sequence, read N- to C-terminus: NAD(P)H-hydrate epimerase (258 aa).

The 230-residue stretch at 15 to 244 (AFQLDQELMS…RIAKEYGIED (230 aa)) folds into the YjeF N-terminal domain. 75–79 (NNGGD) is a binding site for (6S)-NADPHX. K(+)-binding residues include N76 and D145. (6S)-NADPHX-binding positions include 149–155 (GFSFKPP) and D181. K(+) is bound at residue S184.

Belongs to the NnrE/AIBP family. K(+) is required as a cofactor.

Its subcellular location is the cytoplasm. The protein resides in the mitochondrion. It catalyses the reaction (6R)-NADHX = (6S)-NADHX. It carries out the reaction (6R)-NADPHX = (6S)-NADPHX. In terms of biological role, catalyzes the epimerization of the S- and R-forms of NAD(P)HX, a damaged form of NAD(P)H that is a result of enzymatic or heat-dependent hydration. This is a prerequisite for the S-specific NAD(P)H-hydrate dehydratase to allow the repair of both epimers of NAD(P)HX. The polypeptide is NAD(P)H-hydrate epimerase (Candida albicans (strain SC5314 / ATCC MYA-2876) (Yeast)).